We begin with the raw amino-acid sequence, 438 residues long: Adenylyltransferase and sulfurtransferase UBA4 (438 aa).

ATP-binding positions include Gly81, Asp102, 109 to 113, Lys126, and 170 to 171; these read SNLHR and DH. Zn(2+) contacts are provided by Cys212 and Cys215. Cys229 acts as the Glycyl thioester intermediate; for adenylyltransferase activity in catalysis. The Zn(2+) site is built by Cys290 and Cys293. Residues 340–436 form the Rhodanese domain; sequence NKKKHILIDV…WSDDVDSKIP (97 aa). The Cysteine persulfide intermediate; for sulfurtransferase activity role is filled by Cys396.

It in the N-terminal section; belongs to the HesA/MoeB/ThiF family. UBA4 subfamily. Zn(2+) serves as cofactor.

The protein resides in the cytoplasm. Its subcellular location is the cytosol. It participates in tRNA modification; 5-methoxycarbonylmethyl-2-thiouridine-tRNA biosynthesis. Its function is as follows. Plays a central role in 2-thiolation of mcm(5)S(2)U at tRNA wobble positions of cytosolic tRNA(Lys), tRNA(Glu) and tRNA(Gln). Acts by mediating the C-terminal thiocarboxylation of sulfur carrier URM1. Its N-terminus first activates URM1 as acyl-adenylate (-COAMP), then the persulfide sulfur on the catalytic cysteine is transferred to URM1 to form thiocarboxylation (-COSH) of its C-terminus. The reaction probably involves hydrogen sulfide that is generated from the persulfide intermediate and that acts as a nucleophile towards URM1. Subsequently, a transient disulfide bond is formed. Does not use thiosulfate as sulfur donor; NFS1 probably acting as a sulfur donor for thiocarboxylation reactions. Prior mcm(5) tRNA modification by the elongator complex is required for 2-thiolation. May also be involved in protein urmylation. The protein is Adenylyltransferase and sulfurtransferase UBA4 of Candida albicans (strain SC5314 / ATCC MYA-2876) (Yeast).